Reading from the N-terminus, the 549-residue chain is Membrane protein insertase YidC (549 aa).

A helical membrane pass occupies residues 6–26 (NLLLIGLLLVSFMLWQSWMVD). The tract at residues 35–55 (ATAESSVPASSGGDVPNQNDA) is disordered. Transmembrane regions (helical) follow at residues 349–369 (QFLH…TMIV), 424–444 (LGGC…YWTL), 462–482 (LSVK…MWYI), and 503–523 (PIVF…YWVV).

It belongs to the OXA1/ALB3/YidC family. Type 1 subfamily. As to quaternary structure, interacts with the Sec translocase complex via SecD. Specifically interacts with transmembrane segments of nascent integral membrane proteins during membrane integration.

Its subcellular location is the cell inner membrane. Functionally, required for the insertion and/or proper folding and/or complex formation of integral membrane proteins into the membrane. Involved in integration of membrane proteins that insert both dependently and independently of the Sec translocase complex, as well as at least some lipoproteins. Aids folding of multispanning membrane proteins. The protein is Membrane protein insertase YidC of Tolumonas auensis (strain DSM 9187 / NBRC 110442 / TA 4).